Consider the following 273-residue polypeptide: Methylthioribulose-1-phosphate dehydratase (273 aa).

Residues Met-1–Leu-27 are disordered. Cys-114 contacts substrate. 2 residues coordinate Zn(2+): His-132 and His-134. Glu-168 functions as the Proton donor/acceptor in the catalytic mechanism. His-225 is a Zn(2+) binding site.

The protein belongs to the aldolase class II family. MtnB subfamily. It depends on Zn(2+) as a cofactor.

It is found in the cytoplasm. It catalyses the reaction 5-(methylsulfanyl)-D-ribulose 1-phosphate = 5-methylsulfanyl-2,3-dioxopentyl phosphate + H2O. It participates in amino-acid biosynthesis; L-methionine biosynthesis via salvage pathway; L-methionine from S-methyl-5-thio-alpha-D-ribose 1-phosphate: step 2/6. Its function is as follows. Catalyzes the dehydration of methylthioribulose-1-phosphate (MTRu-1-P) into 2,3-diketo-5-methylthiopentyl-1-phosphate (DK-MTP-1-P). The polypeptide is Methylthioribulose-1-phosphate dehydratase (Sordaria macrospora (strain ATCC MYA-333 / DSM 997 / K(L3346) / K-hell)).